We begin with the raw amino-acid sequence, 234 residues long: 2-C-methyl-D-erythritol 4-phosphate cytidylyltransferase (234 aa).

This sequence belongs to the IspD/TarI cytidylyltransferase family. IspD subfamily.

It carries out the reaction 2-C-methyl-D-erythritol 4-phosphate + CTP + H(+) = 4-CDP-2-C-methyl-D-erythritol + diphosphate. Its pathway is isoprenoid biosynthesis; isopentenyl diphosphate biosynthesis via DXP pathway; isopentenyl diphosphate from 1-deoxy-D-xylulose 5-phosphate: step 2/6. Functionally, catalyzes the formation of 4-diphosphocytidyl-2-C-methyl-D-erythritol from CTP and 2-C-methyl-D-erythritol 4-phosphate (MEP). In Syntrophus aciditrophicus (strain SB), this protein is 2-C-methyl-D-erythritol 4-phosphate cytidylyltransferase.